The sequence spans 476 residues: Ribulose bisphosphate carboxylase/oxygenase activase 1, chloroplastic (476 aa).

A chloroplast-targeting transit peptide spans Met1–Val56. Residue Gly165–Ser172 participates in ATP binding.

This sequence belongs to the RuBisCO activase family.

The protein resides in the plastid. Its subcellular location is the chloroplast stroma. In terms of biological role, activation of RuBisCO (ribulose-1,5-bisphosphate carboxylase/oxygenase; EC 4.1.1.39) involves the ATP-dependent carboxylation of the epsilon-amino group of lysine leading to a carbamate structure. In Larrea tridentata (Creosote bush), this protein is Ribulose bisphosphate carboxylase/oxygenase activase 1, chloroplastic (RCA1).